A 485-amino-acid polypeptide reads, in one-letter code: D-alanine--D-alanyl carrier protein ligase (485 aa).

144-145 serves as a coordination point for ATP; the sequence is TS. Asp-189 contacts D-alanine. An ATP-binding site is contributed by 284–289; that stretch reads NTYGPT. A D-alanine-binding site is contributed by Val-293. The ATP site is built by Asp-365 and Lys-473. Lys-473 serves as a coordination point for D-alanine.

This sequence belongs to the ATP-dependent AMP-binding enzyme family. DltA subfamily.

The protein resides in the cytoplasm. The enzyme catalyses holo-[D-alanyl-carrier protein] + D-alanine + ATP = D-alanyl-[D-alanyl-carrier protein] + AMP + diphosphate. It functions in the pathway cell wall biogenesis; lipoteichoic acid biosynthesis. In terms of biological role, catalyzes the first step in the D-alanylation of lipoteichoic acid (LTA), the activation of D-alanine and its transfer onto the D-alanyl carrier protein (Dcp) DltC. In an ATP-dependent two-step reaction, forms a high energy D-alanyl-AMP intermediate, followed by transfer of the D-alanyl residue as a thiol ester to the phosphopantheinyl prosthetic group of the Dcp. D-alanylation of LTA plays an important role in modulating the properties of the cell wall in Gram-positive bacteria, influencing the net charge of the cell wall. In Staphylococcus aureus (strain bovine RF122 / ET3-1), this protein is D-alanine--D-alanyl carrier protein ligase.